Here is a 558-residue protein sequence, read N- to C-terminus: SPATS2-like protein (558 aa).

Position 2 is an N-acetylalanine (Ala2). The span at 63–79 (GKKKNNKRKRSKSKQHQ) shows a compositional bias: basic residues. The tract at residues 63–204 (GKKKNNKRKR…SPVKSNAPAA (142 aa)) is disordered. 2 stretches are compositionally biased toward basic and acidic residues: residues 80 to 92 (GNKDAKDKVERPE) and 110 to 142 (GCEKDSSSPDSTREKLALTPREKKISILEEPPR). At Ser120 the chain carries Phosphoserine. A coiled-coil region spans residues 279–344 (KEEAMDILTA…ARFSCDIEQL (66 aa)). 2 disordered regions span residues 385–406 (GNFARKSSGHNKPSEGKAANPK) and 421–514 (TMPT…RQHA). Residues 421 to 433 (TMPTNKQQNGPSS) show a composition bias toward polar residues. The span at 469 to 485 (HEHRRQPHNGFRPKNKG) shows a compositional bias: basic residues.

The protein belongs to the SPATS2 family.

The protein localises to the cytoplasm. The protein resides in the nucleus. It is found in the nucleolus. The sequence is that of SPATS2-like protein (Spats2l) from Mus musculus (Mouse).